Consider the following 948-residue polypeptide: UvrABC system protein A (948 aa).

33–40 (GLSGSGKS) is an ATP binding site. Residues 252-279 (CPICGFSIGELEPRMFSFNSPFGACPTC) form a C4-type zinc finger. ABC transporter domains follow at residues 309-587 (WIPT…KKSL) and 607-935 (ASDR…KYLK). Residue 639-646 (GVSGSGKS) participates in ATP binding. The C4-type zinc-finger motif lies at 738–764 (CEACKGDGIIKIEMHFLPDVYVPCEVC).

It belongs to the ABC transporter superfamily. UvrA family. Forms a heterotetramer with UvrB during the search for lesions.

Its subcellular location is the cytoplasm. In terms of biological role, the UvrABC repair system catalyzes the recognition and processing of DNA lesions. UvrA is an ATPase and a DNA-binding protein. A damage recognition complex composed of 2 UvrA and 2 UvrB subunits scans DNA for abnormalities. When the presence of a lesion has been verified by UvrB, the UvrA molecules dissociate. The chain is UvrABC system protein A from Staphylococcus aureus (strain MSSA476).